The primary structure comprises 252 residues: Carboxy-S-adenosyl-L-methionine synthase (252 aa).

S-adenosyl-L-methionine contacts are provided by residues Y45, 70–72 (GCS), 95–96 (DN), 123–124 (DI), N138, and R205.

Belongs to the class I-like SAM-binding methyltransferase superfamily. Cx-SAM synthase family. In terms of assembly, homodimer.

It carries out the reaction prephenate + S-adenosyl-L-methionine = carboxy-S-adenosyl-L-methionine + 3-phenylpyruvate + H2O. In terms of biological role, catalyzes the conversion of S-adenosyl-L-methionine (SAM) to carboxy-S-adenosyl-L-methionine (Cx-SAM). In Photorhabdus laumondii subsp. laumondii (strain DSM 15139 / CIP 105565 / TT01) (Photorhabdus luminescens subsp. laumondii), this protein is Carboxy-S-adenosyl-L-methionine synthase.